Here is a 59-residue protein sequence, read N- to C-terminus: Large ribosomal subunit protein bL32 (59 aa).

It belongs to the bacterial ribosomal protein bL32 family.

This chain is Large ribosomal subunit protein bL32, found in Polynucleobacter necessarius subsp. necessarius (strain STIR1).